A 376-amino-acid chain; its full sequence is MSDLPPDLVEDILSRVPATSLKRLRFTCKQWNSLFKNRRFTEKHFCKAPKQSHVLLWKDYTVCPMSINLNFSGSSIEFKSVLSLKDSHYNSEQVYIAKVFHCDGLLLCTTKDHRLLVWNPCLGETRWINFENDYKPYSRFSLGYKNNKSCRSYKILRFWTSYLTPNHIGLRYNIYEFTTDSWRVLIDKVSLNYFLIESENGVSFKGNTYWLALDEETNFLLGFDFTMERFKRLCLPSNKNCDTMVLSVVREEKLSVSHQNFCSSKMDIWMTNRIDSETAMSWKRYFSVEFKILSMCHSLPFCNSFLIDEEKKIVISTVRGNENMVNIIGAYNAYYAEVPVESTNWPCSPYFVSYVPSLVQIQQCKSKENNKTSLEM.

The F-box domain maps to Met-1–His-44.

In Arabidopsis thaliana (Mouse-ear cress), this protein is Putative F-box only protein 9 (FBX9).